The chain runs to 218 residues: Ribose-5-phosphate isomerase A (218 aa).

Residues 28–31, 81–84, and 94–97 each bind substrate; these read TGST, DGAD, and KGGG. E103 acts as the Proton acceptor in catalysis. K121 is a substrate binding site.

The protein belongs to the ribose 5-phosphate isomerase family. As to quaternary structure, homodimer.

It carries out the reaction aldehydo-D-ribose 5-phosphate = D-ribulose 5-phosphate. The protein operates within carbohydrate degradation; pentose phosphate pathway; D-ribose 5-phosphate from D-ribulose 5-phosphate (non-oxidative stage): step 1/1. Functionally, catalyzes the reversible conversion of ribose-5-phosphate to ribulose 5-phosphate. This is Ribose-5-phosphate isomerase A from Aliivibrio fischeri (strain ATCC 700601 / ES114) (Vibrio fischeri).